The sequence spans 70 residues: Protein SlyX homolog (70 aa).

This sequence belongs to the SlyX family.

The chain is Protein SlyX homolog from Shewanella sp. (strain MR-4).